The sequence spans 151 residues: Ubiquitin-conjugating enzyme E2 2 (151 aa).

The region spanning 4–150 is the UBC core domain; the sequence is AARRRLMRDF…VRETVEKSWE (147 aa). Cysteine 88 functions as the Glycyl thioester intermediate in the catalytic mechanism.

This sequence belongs to the ubiquitin-conjugating enzyme family.

It is found in the cytoplasm. The protein localises to the nucleus. The enzyme catalyses S-ubiquitinyl-[E1 ubiquitin-activating enzyme]-L-cysteine + [E2 ubiquitin-conjugating enzyme]-L-cysteine = [E1 ubiquitin-activating enzyme]-L-cysteine + S-ubiquitinyl-[E2 ubiquitin-conjugating enzyme]-L-cysteine.. It functions in the pathway protein modification; protein ubiquitination. Its function is as follows. Catalyzes the covalent attachment of ubiquitin to other proteins. Plays a role in transcription regulation by catalyzing the monoubiquitination of histone H2B to form H2BK123ub1. H2BK123ub1 gives a specific tag for epigenetic transcriptional activation and is also a prerequisite for H3K4me and H3K79me formation. Also involved in postreplication repair of UV-damaged DNA, in N-end rule-dependent protein degradation and in sporulation. The chain is Ubiquitin-conjugating enzyme E2 2 (mus-8) from Neurospora crassa (strain ATCC 24698 / 74-OR23-1A / CBS 708.71 / DSM 1257 / FGSC 987).